We begin with the raw amino-acid sequence, 313 residues long: Putative stilbene synthase 2 (313 aa).

Cysteine 88 is an active-site residue. Substrate contacts are provided by residues leucine 191 and 229–231 (GGP).

Belongs to the thiolase-like superfamily. Chalcone/stilbene synthases family. As to quaternary structure, homodimer.

It localises to the cytoplasm. The catalysed reaction is 4-coumaroyl-CoA + 3 malonyl-CoA + 3 H(+) = trans-resveratrol + 4 CO2 + 4 CoA. The protein operates within phytoalexin biosynthesis; 3,4',5-trihydroxystilbene biosynthesis; 3,4',5-trihydroxystilbene from trans-4-coumarate: step 2/2. This chain is Putative stilbene synthase 2, found in Arachis hypogaea (Peanut).